Consider the following 346-residue polypeptide: MAPRSLLLLLSGALALTDTWAGSHSLRYFSTAVSRPGRGEPRYIAVEYVDDTQFLRFDSDAAIPRMEPREPWVEQEGPQYWEWTTGYAKANAQTDRVALRNLLRRYNQSEAGSHTLQGMNGCDMGPDGRLLRGYHQHAYDGKDYISLNEDLRSWTAADTVAQITQRFYEAEEYAEEFRTYLEGECLELLRRYLENGKETLQRADPPKAHVAHHPISDHEATLRCWALGFYPAEITLTWQRDGEEQTQDTELVETRPAGDGTFQKWAAVVVPPGEEQRYTCHVQHEGLPQPLILRWEQSPQPTIPIVGIVAGLVVLGAVVTGAVVAAVMWRKKSSDRNRGSYSQAAV.

An N-terminal signal peptide occupies residues 1-21 (MAPRSLLLLLSGALALTDTWA). Residues 22 to 111 (GSHSLRYFST…LLRRYNQSEA (90 aa)) form an alpha-1 region. Residues 22–305 (GSHSLRYFST…EQSPQPTIPI (284 aa)) lie on the Extracellular side of the membrane. The a peptide antigen site is built by asparagine 91 and arginine 105. Residue asparagine 107 is glycosylated (N-linked (GlcNAc...) asparagine). The segment at 112–203 (GSHTLQGMNG…ENGKETLQRA (92 aa)) is alpha-2. Cystine bridges form between cysteine 122–cysteine 185 and cysteine 224–cysteine 280. Threonine 164, tyrosine 168, and glutamate 176 together coordinate a peptide antigen. Residues 204–295 (DPPKAHVAHH…GLPQPLILRW (92 aa)) are alpha-3. The 91-residue stretch at 206-296 (PKAHVAHHPI…LPQPLILRWE (91 aa)) folds into the Ig-like C1-type domain. The interval 296–305 (EQSPQPTIPI) is connecting peptide. Residues 306-329 (VGIVAGLVVLGAVVTGAVVAAVMW) traverse the membrane as a helical segment. Topologically, residues 330 to 346 (RKKSSDRNRGSYSQAAV) are cytoplasmic. The Sorting signal sequence; Golgi-retention signal; ER-retention signal motif lies at 336 to 338 (RNR).

This sequence belongs to the MHC class I family. Forms a heterotrimer with B2M and a self-peptide. Binds a diverse number of peptides ranging from 7 to more than 30 amino acids. Peptide-bound HLA-F-B2M interacts with LILRB1 and LILRB2 but not with KIR3DS1 or KIR3DL2; this interaction is direct. The OC form interacts with KIR3DS1, KIR2DS4 and KIR3DL2; this interaction is direct. Interacts with TAP1-TAP2 complex and CALR; this interaction is required for appropriate folding and peptide loading. Interacts with the coat protein complex II and 14-3-3 proteins; these interactions likely control the anterograde ER-to-Golgi transport of HLA-F. HLA-F-B2M complex interacts with the heavy chain of other MHC class I molecules including HLA-A and HLA-E; this interaction may regulate the intracellular trafficking and the stability of peptide-free MHC class I OCs. In terms of processing, N-glycosylated. In terms of tissue distribution, expressed in resting B cells (at protein level). Expressed in secondary lymphoid organs rich in B and T cells such as the tonsils, spleen, and thymus (at protein level). Expressed in the endothelial cells of the tonsils. Expressed on activated lymphoid cells including B cells, NK cells, CD4+ T cells and memory T cells (at protein level). Expressed in motor neurons of spinal cord.

Its subcellular location is the cell membrane. It is found in the early endosome membrane. It localises to the lysosome membrane. In terms of biological role, non-classical major histocompatibility class Ib molecule postulated to play a role in immune surveillance, immune tolerance and inflammation. Functions in two forms, as a heterotrimeric complex with B2M/beta-2 microglobulin and a peptide (peptide-bound HLA-F-B2M) and as an open conformer (OC) devoid of peptide and B2M (peptide-free OC). In complex with B2M, presents non-canonical self-peptides carrying post-translational modifications, particularly phosphorylated self-peptides. Peptide-bound HLA-F-B2M acts as a ligand for LILRB1 inhibitory receptor, a major player in maternal-fetal tolerance. Peptide-free OC acts as a ligand for KIR3DS1 and KIR3DL2 receptors. Upon interaction with activating KIR3DS1 receptor on NK cells, triggers NK cell degranulation and anti-viral cytokine production. Through interaction with KIR3DL2 receptor, inhibits NK and T cell effector functions. May interact with other MHC class I OCs to cross-present exogenous viral, tumor or minor histompatibility antigens to cytotoxic CD8+ T cells, triggering effector and memory responses. May play a role in inflammatory responses in the peripheral nervous system. Through interaction with KIR3DL2, may protect motor neurons from astrocyte-induced toxicity. In Homo sapiens (Human), this protein is HLA class I histocompatibility antigen, alpha chain F.